Consider the following 165-residue polypeptide: Anaerobic nitrite reductase GLB1 (165 aa).

The Globin domain occupies 12–162; the sequence is VFGEEQEALV…LVAAIKREMK (151 aa). A Homodimerization motif is present at residues 45-49; sequence EIAPS. Heme b-binding residues include Ser55, Lys69, His73, Arg103, Thr107, and His108. The Homodimerization signature appears at 115 to 127; the sequence is DGHFEVTGFALLE.

Belongs to the plant globin family. In terms of assembly, homodimer. The cofactor is heme b. In embryonic organs and at low levels in vegetative organs.

It localises to the cytoplasm. The protein resides in the nucleus. It carries out the reaction Fe(III)-heme b-[protein] + nitric oxide + H2O = Fe(II)-heme b-[protein] + nitrite + 2 H(+). Functionally, phytoglobin that reduces nitrite to nitric oxide (NO) under anoxic conditions (e.g. during flooding or in waterlogged soil). May not function as an oxygen storage or transport protein. Has an unusually high affinity for O(2) through an hexacoordinate heme iron because of a very low dissociation constant. This is Anaerobic nitrite reductase GLB1 (HB) from Zea mays (Maize).